The sequence spans 198 residues: Nucleoid occlusion factor SlmA (198 aa).

The HTH tetR-type domain occupies 10–70 (NRREEILQSL…SLIEFIEDSL (61 aa)). The H-T-H motif DNA-binding region spans 33-52 (TTAKLAASVGVSEAALYRHF). Residues 117–144 (EQDRLQGRINQLFERIEAQLRQVLREKR) are a coiled coil.

The protein belongs to the nucleoid occlusion factor SlmA family. In terms of assembly, homodimer. Interacts with FtsZ.

Its subcellular location is the cytoplasm. It is found in the nucleoid. Its function is as follows. Required for nucleoid occlusion (NO) phenomenon, which prevents Z-ring formation and cell division over the nucleoid. Acts as a DNA-associated cell division inhibitor that binds simultaneously chromosomal DNA and FtsZ, and disrupts the assembly of FtsZ polymers. SlmA-DNA-binding sequences (SBS) are dispersed on non-Ter regions of the chromosome, preventing FtsZ polymerization at these regions. This Escherichia coli (strain 55989 / EAEC) protein is Nucleoid occlusion factor SlmA.